Here is a 218-residue protein sequence, read N- to C-terminus: 3-isopropylmalate dehydratase small subunit (218 aa).

It belongs to the LeuD family. LeuD type 1 subfamily. Heterodimer of LeuC and LeuD.

It carries out the reaction (2R,3S)-3-isopropylmalate = (2S)-2-isopropylmalate. The protein operates within amino-acid biosynthesis; L-leucine biosynthesis; L-leucine from 3-methyl-2-oxobutanoate: step 2/4. Functionally, catalyzes the isomerization between 2-isopropylmalate and 3-isopropylmalate, via the formation of 2-isopropylmaleate. In Alkalilimnicola ehrlichii (strain ATCC BAA-1101 / DSM 17681 / MLHE-1), this protein is 3-isopropylmalate dehydratase small subunit.